The sequence spans 468 residues: Adenosylhomocysteinase (468 aa).

Residues T57, D132, and E194 each contribute to the substrate site. 195 to 197 (TTT) lines the NAD(+) pocket. Residues K224 and D228 each coordinate substrate. Residues N229, 258 to 263 (GFGDVG), E281, N316, 337 to 339 (IGH), and N382 contribute to the NAD(+) site.

The protein belongs to the adenosylhomocysteinase family. NAD(+) serves as cofactor.

The protein localises to the cytoplasm. It catalyses the reaction S-adenosyl-L-homocysteine + H2O = L-homocysteine + adenosine. It functions in the pathway amino-acid biosynthesis; L-homocysteine biosynthesis; L-homocysteine from S-adenosyl-L-homocysteine: step 1/1. Its function is as follows. May play a key role in the regulation of the intracellular concentration of adenosylhomocysteine. The protein is Adenosylhomocysteinase of Methylobacterium sp. (strain 4-46).